Here is a 387-residue protein sequence, read N- to C-terminus: Succinate--CoA ligase [ADP-forming] subunit beta (387 aa).

One can recognise an ATP-grasp domain in the interval 9–236; that stretch reads KGLFAKHNVP…RAATDPLELK (228 aa). Residues Lys-45, 52–54, Ser-94, and Glu-99 each bind ATP; that span reads GRG. Residues Asn-191 and Asp-205 each coordinate Mg(2+). Residues Asn-256 and 318–320 contribute to the substrate site; that span reads GIT.

Belongs to the succinate/malate CoA ligase beta subunit family. As to quaternary structure, heterotetramer of two alpha and two beta subunits. The cofactor is Mg(2+).

It carries out the reaction succinate + ATP + CoA = succinyl-CoA + ADP + phosphate. The catalysed reaction is GTP + succinate + CoA = succinyl-CoA + GDP + phosphate. The protein operates within carbohydrate metabolism; tricarboxylic acid cycle; succinate from succinyl-CoA (ligase route): step 1/1. Its function is as follows. Succinyl-CoA synthetase functions in the citric acid cycle (TCA), coupling the hydrolysis of succinyl-CoA to the synthesis of either ATP or GTP and thus represents the only step of substrate-level phosphorylation in the TCA. The beta subunit provides nucleotide specificity of the enzyme and binds the substrate succinate, while the binding sites for coenzyme A and phosphate are found in the alpha subunit. This Mycobacterium ulcerans (strain Agy99) protein is Succinate--CoA ligase [ADP-forming] subunit beta.